Consider the following 156-residue polypeptide: uncharacterized protein (156 aa).

This is an uncharacterized protein from Acheta domesticus (House cricket).